Here is a 937-residue protein sequence, read N- to C-terminus: AP-2 complex subunit beta (937 aa).

Position 2 is an N-acetylthreonine (T2). S4 bears the Phosphoserine mark. K265 is modified (N6-acetyllysine). Residues Y737 and Y928 each carry the phosphotyrosine modification.

This sequence belongs to the adaptor complexes large subunit family. In terms of assembly, adapter protein complex 2 (AP-2) is a heterotetramer composed of two large adaptins (alpha-type subunit AP2A1 or AP2A2 and beta-type subunit AP2B1), a medium adaptin (mu-type subunit AP2M1) and a small adaptin (sigma-type subunit AP2S1). Interacts with EPN1. Interacts with EPS15; clathrin competes with EPS15. Interacts with SNAP91; clathrin competes with SNAP91. Interacts with CLTC; clathrin competes with EPS15, SNAP91 and PIP5K1C. Interacts with LDLRAP1. Interacts with AMPH and BIN1. Interacts with ARF6 (GDP-bound). Interacts (dephosphorylated at Tyr-737) with ARRB1; phosphorylation of AP2B1 at Tyr-737 disrupts the interaction. Interacts with SLC2A8. Interacts with SCYL1 and SCYL2. Interacts with TGFBR1 and TGFBR2. Interacts with PIP5K1C; clathrin competes with PIP5K1C. Interacts with DENND1B. Interacts with FCHO1. Interacts with RFTN1. Interacts with KIAA1107. Together with AP2A1 or AP2A2 and AP2M1, it interacts with ADAM10; this interaction facilitates ADAM10 endocytosis from the plasma membrane during long-term potentiation in hippocampal neurons. In terms of processing, the N-terminus is blocked. Phosphorylation at Tyr-737 by SRC occurs at the plasma membrane in clathrin-coated vesicles (CCVs).

Its subcellular location is the cell membrane. The protein localises to the membrane. The protein resides in the coated pit. In terms of biological role, component of the adaptor protein complex 2 (AP-2). Adaptor protein complexes function in protein transport via transport vesicles in different membrane traffic pathways. Adaptor protein complexes are vesicle coat components and appear to be involved in cargo selection and vesicle formation. AP-2 is involved in clathrin-dependent endocytosis in which cargo proteins are incorporated into vesicles surrounded by clathrin (clathrin-coated vesicles, CCVs) which are destined for fusion with the early endosome. The clathrin lattice serves as a mechanical scaffold but is itself unable to bind directly to membrane components. Clathrin-associated adaptor protein (AP) complexes which can bind directly to both the clathrin lattice and to the lipid and protein components of membranes are considered to be the major clathrin adaptors contributing the CCV formation. AP-2 also serves as a cargo receptor to selectively sort the membrane proteins involved in receptor-mediated endocytosis. AP-2 seems to play a role in the recycling of synaptic vesicle membranes from the presynaptic surface. AP-2 recognizes Y-X-X-[FILMV] (Y-X-X-Phi) and [ED]-X-X-X-L-[LI] endocytosis signal motifs within the cytosolic tails of transmembrane cargo molecules. AP-2 may also play a role in maintaining normal post-endocytic trafficking through the ARF6-regulated, non-clathrin pathway. During long-term potentiation in hippocampal neurons, AP-2 is responsible for the endocytosis of ADAM10. The AP-2 beta subunit acts via its C-terminal appendage domain as a scaffolding platform for endocytic accessory proteins; at least some clathrin-associated sorting proteins (CLASPs) are recognized by their [DE]-X(1,2)-F-X-X-[FL]-X-X-X-R motif. The AP-2 beta subunit binds to clathrin heavy chain, promoting clathrin lattice assembly; clathrin displaces at least some CLASPs from AP2B1 which probably then can be positioned for further coat assembly. This Bos taurus (Bovine) protein is AP-2 complex subunit beta (AP2B1).